The primary structure comprises 58 residues: Ranakinin-N (58 aa).

The N-terminal stretch at 1–22 (MFTMKKSLLLLFFLGTISMSLC) is a signal peptide. A propeptide spanning residues 23 to 43 (EEKRDADEEETEGEAKMEDIK) is cleaved from the precursor. Positions 25 to 58 (KRDADEEETEGEAKMEDIKRAEAVPPGFTPFRKP) are disordered. The segment covering 35 to 46 (GEAKMEDIKRAE) has biased composition (basic and acidic residues).

Expressed by the skin glands.

The protein resides in the secreted. Induces contraction of intestinal smooth muscle in isolated guinea pig ileum. May induce relaxation of arterial smooth muscle. May target bradykinin receptors (BDKRB). Lacks antibacterial activity against the Gram-positive bacterium S.aureus and the Gram-negative bacteria E.coli and B.dysenteria, and antifungal activity against C.albicans. The sequence is that of Ranakinin-N from Hylarana nigrovittata (Black-striped frog).